Consider the following 432-residue polypeptide: D-amino acid dehydrogenase (432 aa).

An FAD-binding site is contributed by 3–17 (VLVLGSGVVGTASAY).

The protein belongs to the DadA oxidoreductase family. FAD serves as cofactor.

It catalyses the reaction a D-alpha-amino acid + A + H2O = a 2-oxocarboxylate + AH2 + NH4(+). The protein operates within amino-acid degradation; D-alanine degradation; NH(3) and pyruvate from D-alanine: step 1/1. In terms of biological role, oxidative deamination of D-amino acids. This is D-amino acid dehydrogenase from Stutzerimonas stutzeri (strain A1501) (Pseudomonas stutzeri).